The chain runs to 350 residues: Protein RecA (350 aa).

65-72 (GPESSGKT) contacts ATP.

This sequence belongs to the RecA family.

It is found in the cytoplasm. Its function is as follows. Can catalyze the hydrolysis of ATP in the presence of single-stranded DNA, the ATP-dependent uptake of single-stranded DNA by duplex DNA, and the ATP-dependent hybridization of homologous single-stranded DNAs. It interacts with LexA causing its activation and leading to its autocatalytic cleavage. In Nautilia profundicola (strain ATCC BAA-1463 / DSM 18972 / AmH), this protein is Protein RecA.